Reading from the N-terminus, the 226-residue chain is UPF0177 protein YbdJ (226 aa).

5 helical membrane passes run 16 to 36 (LLLL…LGIF), 43 to 63 (FAFN…IVIA), 81 to 101 (LLFI…AHHL), 169 to 189 (FAWV…ISLV), and 206 to 226 (LHSS…FWVF).

This sequence belongs to the UPF0177 family.

It is found in the cell membrane. This chain is UPF0177 protein YbdJ (ybdJ), found in Lactococcus lactis subsp. lactis (strain IL1403) (Streptococcus lactis).